The chain runs to 439 residues: Exodeoxyribonuclease 7 large subunit (439 aa).

It belongs to the XseA family. As to quaternary structure, heterooligomer composed of large and small subunits.

The protein localises to the cytoplasm. It carries out the reaction Exonucleolytic cleavage in either 5'- to 3'- or 3'- to 5'-direction to yield nucleoside 5'-phosphates.. In terms of biological role, bidirectionally degrades single-stranded DNA into large acid-insoluble oligonucleotides, which are then degraded further into small acid-soluble oligonucleotides. This Haemophilus influenzae (strain 86-028NP) protein is Exodeoxyribonuclease 7 large subunit.